Here is a 137-residue protein sequence, read N- to C-terminus: Ribonuclease VapC51 (137 aa).

The PINc domain occupies 5-120 (YLLDTSVIKR…HYDADFDLIA (116 aa)). Mg(2+) is bound by residues D8 and D95.

This sequence belongs to the PINc/VapC protein family. Mg(2+) is required as a cofactor.

In terms of biological role, toxic component of a type II toxin-antitoxin (TA) system. An RNase. Its cognate antitoxin is VapB51. The protein is Ribonuclease VapC51 of Mycobacterium tuberculosis (strain ATCC 25618 / H37Rv).